The chain runs to 238 residues: ATP synthase subunit a (238 aa).

Helical transmembrane passes span 15 to 35, 76 to 96, 111 to 131, 167 to 187, and 208 to 230; these read IFNLTMLAMTLLIVGVIFVFI, YSLFFLCLFLFMVIANNLGLM, PTANLQYDLTLSFLVILLTHI, LALRIFGNIFAGEVMTSLLLL, and AFSVFISCIQAYVFTLLTSVYLG.

Belongs to the ATPase A chain family. As to quaternary structure, F-type ATPases have 2 components, CF(1) - the catalytic core - and CF(0) - the membrane proton channel. CF(1) has five subunits: alpha(3), beta(3), gamma(1), delta(1), epsilon(1). CF(0) has three main subunits: a(1), b(2) and c(9-12). The alpha and beta chains form an alternating ring which encloses part of the gamma chain. CF(1) is attached to CF(0) by a central stalk formed by the gamma and epsilon chains, while a peripheral stalk is formed by the delta and b chains.

The protein resides in the cell membrane. Its function is as follows. Key component of the proton channel; it plays a direct role in the translocation of protons across the membrane. The polypeptide is ATP synthase subunit a (Streptococcus pneumoniae serotype 19F (strain G54)).